The sequence spans 223 residues: Endonuclease V (223 aa).

The Mg(2+) site is built by aspartate 45 and aspartate 113.

Belongs to the endonuclease V family. Mg(2+) serves as cofactor.

Its subcellular location is the cytoplasm. It carries out the reaction Endonucleolytic cleavage at apurinic or apyrimidinic sites to products with a 5'-phosphate.. In terms of biological role, DNA repair enzyme involved in the repair of deaminated bases. Selectively cleaves double-stranded DNA at the second phosphodiester bond 3' to a deoxyinosine leaving behind the intact lesion on the nicked DNA. The chain is Endonuclease V from Dehalococcoides mccartyi (strain ATCC BAA-2100 / JCM 16839 / KCTC 5957 / BAV1).